Here is a 568-residue protein sequence, read N- to C-terminus: Natural resistance-associated macrophage protein 2 (568 aa).

Positions 1–20 are enriched in basic and acidic residues; it reads MVLDPEEKIPDDGASGDHGD. A disordered region spans residues 1–45; sequence MVLDPEEKIPDDGASGDHGDSASLGAINPAYSNSSLPHSTGDSEE. Over 1-69 the chain is Cytoplasmic; that stretch reads MVLDPEEKIP…EEYSCFSFRK (69 aa). Residues 30 to 40 show a composition bias toward polar residues; that stretch reads AYSNSSLPHST. A helical membrane pass occupies residues 70 to 90; sequence LWAFTGPGFLMSIAYLDPGNI. At 91 to 95 the chain is on the extracellular side; the sequence is ESDLQ. A helical membrane pass occupies residues 96 to 117; sequence SGAVAGFKLLWVLLLATIVGLL. Topologically, residues 118–154 are cytoplasmic; it reads LQRLAARLGVVTGLHLAEVCHRQYPKVPRIILWLMVE. The helical transmembrane segment at 155–175 threads the bilayer; the sequence is LAIIGSDMQEVIGSAIAINLL. Residues 176–179 are Extracellular-facing; the sequence is SAGR. Residues 180 to 194 form a helical membrane-spanning segment; sequence VPLYGGVLITIADTF. At 195-208 the chain is on the cytoplasmic side; sequence VFLFLDKYGLRKLE. A helical membrane pass occupies residues 209–229; sequence AFFGFLITIMALTFGYEYVTV. The Extracellular segment spans residues 230–255; it reads KPSQSQVLRGMFVPSCSGCHTPQVEQ. A helical transmembrane segment spans residues 256-276; it reads AVGIVGAVIMPHNMYLHSALV. The Cytoplasmic portion of the chain corresponds to 277-301; that stretch reads KSRQVNRANKQEVREANKYFFIESC. A helical transmembrane segment spans residues 302–322; the sequence is IALFVSFIINVFVVSVFAEAF. The Extracellular segment spans residues 323-360; the sequence is FEKTNEQVVEVCRNSSSPHADLFPNDNSTLAVDIYKGG. Residues asparagine 336 and asparagine 349 are each glycosylated (N-linked (GlcNAc...) asparagine). A helical transmembrane segment spans residues 361–381; the sequence is VVLGCYFGPAALYIWAVGILA. Residues 382–408 lie on the Cytoplasmic side of the membrane; that stretch reads AGQSSTMTGTYSGQFVMEGFLNLKWSR. A helical transmembrane segment spans residues 409–429; that stretch reads FARVILTRSIAIIPTLLVAVF. The Extracellular segment spans residues 430-440; it reads QDVEHLTGMND. The helical transmembrane segment at 441 to 461 threads the bilayer; the sequence is FLNVLQSLQLPFALIPILTFT. Over 462 to 482 the chain is Cytoplasmic; sequence SLRPVMSEFSNGIGWRIAGGI. A helical transmembrane segment spans residues 483–503; it reads LVLLVCSINMYFVVVYVQELG. The Extracellular portion of the chain corresponds to 504-506; that stretch reads HVA. A helical membrane pass occupies residues 507-527; it reads LYVVAAVVSVAYLGFVFYLGW. Over 528-568 the chain is Cytoplasmic; the sequence is QCLIALGLSFLDCGRSYHLGLTARPEIYLLNTVDAVSLVSR. The segment at 555–559 is required for early endosome targeting; the sequence is YLLNT. Phosphoserine occurs at positions 556, 564, and 567.

It belongs to the NRAMP family. In terms of assembly, forms a complex with NDFIP1 and NEDD4L, in cortical neurons, in response to iron and cobalt exposure; this interaction leads to SLC11A2 ubiquitination by NEDD4L and proteasome-dependent degradation. Interacts with NDFIP1, NDFIP2 and WWP2; this interaction leads to SLC11A2 ubiquitination by WWP2 and subsequent proteasome-dependent degradation. Interacts with COX2 and TOM6 at the outer mitochondrion membrane. Interacts with ARRDC1; this interaction regulates the incorporation of SLC11A2 into extracellular vesicles through an ubiquitination-dependent mechanism. Interacts with ARRDC4; controls the incorporation of SLC11A2 into extracellular vesicles through an ubiquitination-dependent mechanism. Ubiquitinated by WWP2. Post-translationally, N-glycosylated. Ubiquitous. In terms of tissue distribution, expressed in proximal intestine, kidney and brain.

The protein localises to the golgi apparatus. The protein resides in the trans-Golgi network membrane. It is found in the early endosome membrane. It localises to the recycling endosome membrane. Its subcellular location is the late endosome membrane. The protein localises to the lysosome membrane. The protein resides in the apical cell membrane. It is found in the mitochondrion outer membrane. It localises to the extracellular vesicle membrane. The catalysed reaction is Fe(2+)(in) + H(+)(in) = Fe(2+)(out) + H(+)(out). It catalyses the reaction Cd(2+)(out) + H(+)(out) = Cd(2+)(in) + H(+)(in). It carries out the reaction Co(2+)(out) + H(+)(out) = Co(2+)(in) + H(+)(in). The enzyme catalyses Mn(2+)(in) + H(+)(in) = Mn(2+)(out) + H(+)(out). The catalysed reaction is Zn(2+)(out) + H(+)(out) = Zn(2+)(in) + H(+)(in). It catalyses the reaction Ni(2+)(out) + H(+)(out) = Ni(2+)(in) + H(+)(in). It carries out the reaction H(+)(in) = H(+)(out). The enzyme catalyses Fe(2+)(in) = Fe(2+)(out). Its activity is regulated as follows. Inhibited by 2-(3-carbamimidoylsulfanylmethyl-benzyl)-isothiourea. Functionally, proton-coupled metal ion symporter operating with a proton to metal ion stoichiometry of 1:1. Selectively transports various divalent metal cations, in decreasing affinity: Cd(2+) &gt; Fe(2+) &gt; Co(2+), Mn(2+) &gt;&gt; Zn(2+), Ni(2+), VO(2+). Essential for maintenance of iron homeostasis by modulating intestinal absorption of dietary Fe(2+) and TF-associated endosomal Fe(2+) transport in erythroid precursors and other cells. Enables Fe(2+) and Mn(2+) ion entry into mitochondria, and is thus expected to promote mitochondrial heme synthesis, iron-sulfur cluster biogenesis and antioxidant defense. Can mediate uncoupled fluxes of either protons or metal ions. The polypeptide is Natural resistance-associated macrophage protein 2 (Slc11a2) (Rattus norvegicus (Rat)).